Reading from the N-terminus, the 156-residue chain is Ribonuclease H (156 aa).

Positions 3-144 constitute an RNase H type-1 domain; the sequence is ERKLIHIFTD…CDILARSAAE (142 aa). Positions 12, 50, 72, and 136 each coordinate Mg(2+).

The protein belongs to the RNase H family. Monomer. The cofactor is Mg(2+).

The protein localises to the cytoplasm. It catalyses the reaction Endonucleolytic cleavage to 5'-phosphomonoester.. Its function is as follows. Endonuclease that specifically degrades the RNA of RNA-DNA hybrids. The protein is Ribonuclease H of Shewanella putrefaciens (strain CN-32 / ATCC BAA-453).